A 152-amino-acid polypeptide reads, in one-letter code: Large ribosomal subunit protein bL9 (152 aa).

It belongs to the bacterial ribosomal protein bL9 family.

Its function is as follows. Binds to the 23S rRNA. The polypeptide is Large ribosomal subunit protein bL9 (Prochlorococcus marinus (strain NATL1A)).